Consider the following 123-residue polypeptide: Holo-[acyl-carrier-protein] synthase (123 aa).

The Mg(2+) site is built by Asp-8 and Glu-56.

Belongs to the P-Pant transferase superfamily. AcpS family. The cofactor is Mg(2+).

Its subcellular location is the cytoplasm. It carries out the reaction apo-[ACP] + CoA = holo-[ACP] + adenosine 3',5'-bisphosphate + H(+). Its function is as follows. Transfers the 4'-phosphopantetheine moiety from coenzyme A to a Ser of acyl-carrier-protein. The polypeptide is Holo-[acyl-carrier-protein] synthase (Clostridium botulinum (strain Alaska E43 / Type E3)).